We begin with the raw amino-acid sequence, 748 residues long: Histone-lysine N-methyltransferase EZH2 (748 aa).

Residues 184 to 199 show a composition bias toward acidic residues; the sequence is YEDDEDGDDNQDDEQD. Disordered regions lie at residues 184–220 and 342–428; these read YEDD…LRKF and AERI…NIEP. A compositionally biased stretch (basic and acidic residues) spans 200–220; that stretch reads DTAKDQDDNMEDKETQPLRKF. Positions 347–359 are enriched in basic residues; it reads TPPKRPSGRRRGR. The segment covering 362–374 has biased composition (polar residues); the sequence is NNTSRPSTPTVNV. Over residues 376-387 the composition is skewed to basic and acidic residues; it reads EAKDTDSDREAG. The CXC domain occupies 505–607; that stretch reads CRKIQLKKDG…SKNVSCKNCS (103 aa). In terms of domain architecture, SET spans 614–729; that stretch reads KHLLLAPSDV…TGEELFFDYR (116 aa).

Belongs to the class V-like SAM-binding methyltransferase superfamily. Histone-lysine methyltransferase family. EZ subfamily. Component of the prc2/eed-ezh2 complex.

The protein resides in the nucleus. The catalysed reaction is L-lysyl(27)-[histone H3] + 3 S-adenosyl-L-methionine = N(6),N(6),N(6)-trimethyl-L-lysyl(27)-[histone H3] + 3 S-adenosyl-L-homocysteine + 3 H(+). Functionally, polycomb group (PcG) protein. Catalytic subunit of the prc2/eed-ezh2 complex, which methylates 'Lys-9' and 'Lys-27' of histone H3, leading to transcriptional repression of the affected target gene. May repress transcription of the egr2 and en2 genes. May regulate the circadian clock via histone methylation at the promoter of the circadian genes. In Xenopus laevis (African clawed frog), this protein is Histone-lysine N-methyltransferase EZH2 (ezh2-a).